The sequence spans 1058 residues: Bromodomain-containing protein 1 (1058 aa).

Residues 1 to 12 show a composition bias toward basic residues; the sequence is MRRKGRCHRGSA. The tract at residues 1–26 is disordered; the sequence is MRRKGRCHRGSAARHPSSPCSVKHSP. Residues 31–80 form an interaction with KAT7/HBO1 and histones region; that stretch reads LTYAQAQRMVEIEIEGRLHRISIFDPLEIILEDDLTAQEMSECNSNKENS. The interval 92-116 is disordered; the sequence is HKNNRVKKKNEALPSAHGTPASASA. S128 carries the post-translational modification Phosphoserine. Residues 214 to 264 form a PHD-type 1 zinc finger; sequence DAVCCICMDGECQNSNVILFCDMCNLAVHQECYGVPYIPEGQWLCRHCLQS. The segment at 268 to 301 adopts a C2HC pre-PHD-type zinc-finger fold; the sequence is PADCVLCPNKGGAFKKTDDDRWGHVVCALWIPEV. Residues 325-389 form a PHD-type 2 zinc finger; that stretch reads LTCYLCKQKG…RKTAYCDVHT (65 aa). K368, K516, and K519 each carry N6-acetyllysine. Residues K554 and K594 each participate in a glycyl lysine isopeptide (Lys-Gly) (interchain with G-Cter in SUMO2) cross-link. The Bromo domain maps to 562–666; the sequence is LRLTPLTVLL…DQGGVVLRQA (105 aa). Disordered stretches follow at residues 755 to 776 and 791 to 868; these read LSQQ…EEDG and LETL…DSSF. S803 bears the Phosphoserine mark. The span at 852-867 shows a compositional bias: low complexity; it reads SESSISSSNSPLCDSS. Position 903 is an N6-acetyllysine (K903). R906 carries the phosphoserine modification. In terms of domain architecture, PWWP spans 929-1012; it reads PLKVVWAKCS…KSKMVPLGID (84 aa). Phosphoserine is present on residues S1052 and S1055.

In terms of assembly, component of some HBO1 complex composed of KAT7/HBO1, MEAF6, ING4 and BRD1/BRPF2. Component of the MOZ/MORF complex composed at least of ING5, KAT6A, KAT6B, MEAF6 and one of BRPF1, BRD1/BRPF2 and BRPF3. Interacts (via PHD-type zinc finger domain) with unmodified histone H3. Interacts (via PWWP domain) with dimethylated and trimethylated 'Lys-79' on histone H3. As to expression, highly expressed in testis.

Its subcellular location is the nucleus. The protein resides in the chromosome. Scaffold subunit of various histone acetyltransferase (HAT) complexes, such as the MOZ/MORF and HBO1 complexes, that acts as a regulator of hematopoiesis. Plays a key role in HBO1 complex by directing KAT7/HBO1 specificity towards histone H3 'Lys-14' acetylation (H3K14ac), thereby promoting erythroid differentiation. The sequence is that of Bromodomain-containing protein 1 from Homo sapiens (Human).